Consider the following 74-residue polypeptide: ATP synthase subunit c (74 aa).

2 helical membrane passes run 8-28 (FIGIGLMAIGIYGAALGVSNI) and 52-72 (IGAGLAEAMGLFSFVIAMLLI).

This sequence belongs to the ATPase C chain family. F-type ATPases have 2 components, F(1) - the catalytic core - and F(0) - the membrane proton channel. F(1) has five subunits: alpha(3), beta(3), gamma(1), delta(1), epsilon(1). F(0) has three main subunits: a(1), b(2) and c(10-14). The alpha and beta chains form an alternating ring which encloses part of the gamma chain. F(1) is attached to F(0) by a central stalk formed by the gamma and epsilon chains, while a peripheral stalk is formed by the delta and b chains.

The protein resides in the cell inner membrane. In terms of biological role, f(1)F(0) ATP synthase produces ATP from ADP in the presence of a proton or sodium gradient. F-type ATPases consist of two structural domains, F(1) containing the extramembraneous catalytic core and F(0) containing the membrane proton channel, linked together by a central stalk and a peripheral stalk. During catalysis, ATP synthesis in the catalytic domain of F(1) is coupled via a rotary mechanism of the central stalk subunits to proton translocation. Its function is as follows. Key component of the F(0) channel; it plays a direct role in translocation across the membrane. A homomeric c-ring of between 10-14 subunits forms the central stalk rotor element with the F(1) delta and epsilon subunits. The sequence is that of ATP synthase subunit c from Rickettsia akari (strain Hartford).